The sequence spans 259 residues: Transcription factor bHLH125 (259 aa).

Residues 73-125 enclose the bHLH domain; that stretch reads SKKMKHRDIERQRRQEVSSLFKRLRTLLPFQYIQGKRSTSDHIVQAVNYIKDL.

In terms of assembly, homodimer.

It localises to the nucleus. In Arabidopsis thaliana (Mouse-ear cress), this protein is Transcription factor bHLH125 (BHLH125).